The primary structure comprises 238 residues: Probable transcriptional regulatory protein YeeN (238 aa).

This sequence belongs to the TACO1 family. YeeN subfamily.

Its subcellular location is the cytoplasm. The polypeptide is Probable transcriptional regulatory protein YeeN (Escherichia coli O157:H7).